Reading from the N-terminus, the 393-residue chain is Cytotoxic and regulatory T-cell molecule (393 aa).

The N-terminal stretch at Met-1–Ala-17 is a signal peptide. The region spanning Ser-18 to Val-114 is the Ig-like V-type domain. Residues Ser-18 to Gly-287 are Extracellular-facing. N-linked (GlcNAc...) asparagine glycans are attached at residues Asn-21, Asn-87, and Asn-178. Cystine bridges form between Cys-38–Cys-98 and Cys-141–Cys-196. Residues Pro-118–Ala-210 form the Ig-like C2-type domain. The tract at residues Ser-225–Glu-273 is disordered. Positions Asn-231–Pro-241 are enriched in polar residues. Residues Thr-242–Ser-254 show a composition bias toward low complexity. Residues Glu-255 to Thr-264 are compositionally biased toward basic and acidic residues. The helical transmembrane segment at Ile-288–Phe-308 threads the bilayer. Topologically, residues Ile-309–Val-393 are cytoplasmic. 2 stretches are compositionally biased toward basic and acidic residues: residues His-328–Asn-348 and Glu-374–Gln-387. 2 disordered regions span residues His-328–Pro-354 and Glu-374–Val-393. The short motif at Glu-390 to Val-393 is the PDZ-binding element.

It belongs to the nectin family. Monomer. May form homodimer (via Ig-like V-type domain). Interacts (via Ig-like V-type domain) with CADM1 (via Ig-like V-type domain); the interaction competes with CRTAM homodimerization and CADM1 homodimerization. Interacts (via PDZ-binding motif) with SCRIB (via PDZ domain 3); the interaction promotes CRTAM and SCRIB polarization in a subset of CD4+ T-cells. In the immune system, expression is restricted to activated class-I MHC-restricted cells, including NKT and CD8 T-cells. Strongly expressed in spleen, thymus, small intestine, peripheral blood leukocyte, and in Purkinje neurons in cerebellum. Expressed at much lower levels in testis, ovary, colon, lung and lymphoid tissues.

The protein resides in the cell membrane. Its function is as follows. Mediates heterophilic cell-cell adhesion which regulates the activation, differentiation and tissue retention of various T-cell subsets. Interaction with CADM1 promotes natural killer (NK) cell cytotoxicity and IFNG/interferon-gamma secretion by CD8+ T-cells in vitro as well as NK cell-mediated rejection of tumors expressing CADM1 in vivo. Regulates CD8+ T-cell proliferation in response to T-cell receptor (TCR) activation. Appears to be dispensable for CD8+ T-cell-mediated cytotoxicity. Interaction with SCRIB promotes the late phase of cellular polarization of a subset of CD4+ T-cells, which in turn regulates TCR-mediated proliferation and IFNG, IL17 and IL22 production. By interacting with CADM1 on CD8+ dendritic cells, regulates the retention of activated CD8+ T-cells within the draining lymph node. Required for the intestinal retention of intraepithelial CD4+ CD8+ T-cells and, to a lesser extent, intraepithelial and lamina propria CD8+ T-cells and CD4+ T-cells. Interaction with CADM1 promotes the adhesion to gut-associated CD103+ dendritic cells, which may facilitate the expression of gut-homing and adhesion molecules on T-cells and the conversion of CD4+ T-cells into CD4+ CD8+ T-cells. The chain is Cytotoxic and regulatory T-cell molecule from Homo sapiens (Human).